A 1451-amino-acid chain; its full sequence is Dual 3',5'-cyclic-AMP and -GMP phosphodiesterase 11 (1451 aa).

Disordered stretches follow at residues 1-54, 75-100, 125-169, 235-262, and 327-374; these read MGQA…PQIQ, ATTP…GGYG, LPAH…QVQQ, GNDV…GATT, and QHHH…GSGG. Residues 11–21 are compositionally biased toward basic residues; sequence RGCRYKNKNKS. Over residues 24–45 the composition is skewed to low complexity; that stretch reads QQQQQQQQQQQQQQQHQQQQQQ. Over residues 77–91 the composition is skewed to polar residues; it reads TPLQFQPTGRMNTEQ. Composition is skewed to low complexity over residues 135 to 147 and 160 to 169; these read SGAA…NGSS and QQQQQYQVQQ. Residues 235–248 show a composition bias toward polar residues; that stretch reads GNDVVSSTSPTHAN. Positions 327–340 are enriched in basic residues; sequence QHHHNHAHLHHSQH. Residues 341–355 show a composition bias toward low complexity; sequence SHYQAGGAVGSSSLG. A compositionally biased stretch (gly residues) spans 356 to 374; sequence STGGASGAGGAPSLGGSGG. GAF domains are found at residues 419–572 and 604–754; these read EVRT…GIGL and TIEH…GMGI. The 325-residue stretch at 783–1107 folds into the PDEase domain; the sequence is ATMDEAHRLR…GHWIDLADVV (325 aa). Histidine 860 functions as the Proton donor in the catalytic mechanism. 4 residues coordinate a divalent metal cation: histidine 864, histidine 900, aspartate 901, and aspartate 1011. Disordered stretches follow at residues 1109-1171, 1200-1248, 1268-1305, and 1325-1364; these read TKTS…SNTN, DEQA…TPVS, QTSN…QELD, and INNH…IGSA. 2 stretches are compositionally biased toward low complexity: residues 1142 to 1171 and 1218 to 1234; these read ASEA…SNTN and CRSN…SCLS. Over residues 1268–1277 the composition is skewed to polar residues; that stretch reads QTSNQAQTQK. Residues 1328-1355 show a composition bias toward basic residues; that stretch reads HSHHHNHSHSHNHNHHHHHHHHSHHNHS.

It belongs to the cyclic nucleotide phosphodiesterase family. A divalent metal cation serves as cofactor. In terms of tissue distribution, in adults, it is enriched in Malpighian tubules.

It catalyses the reaction 3',5'-cyclic GMP + H2O = GMP + H(+). The enzyme catalyses 3',5'-cyclic AMP + H2O = AMP + H(+). Plays a role in signal transduction by regulating the intracellular concentration of cyclic nucleotides cAMP and cGMP. Dual-specificity phosphodiesterase that catalyzes the hydrolysis of both cAMP and cGMP to 5'-AMP and 5'-GMP, respectively. This is Dual 3',5'-cyclic-AMP and -GMP phosphodiesterase 11 (Pde11) from Drosophila melanogaster (Fruit fly).